A 657-amino-acid chain; its full sequence is Pentatricopeptide repeat-containing protein At5g44230 (657 aa).

12 PPR repeats span residues 45 to 79 (KELLVSSLISKLDDCINLNQIKQIHGHVLRKGLDQ), 80 to 112 (SCYILTKLIRTLTKLGVPMDPYARRVIEPVQFR), 113 to 147 (NPFLWTAVIRGYAIEGKFDEAIAMYGCMRKEEITP), 148 to 178 (VSFTFSALLKACGTMKDLNLGRQFHAQTFRL), 183 to 213 (FVYVGNTMIDMYVKCESIDCARKVFDEMPER), 214 to 244 (DVISWTELIAAYARVGNMECAAELFESLPTK), 245 to 279 (DMVAWTAMVTGFAQNAKPQEALEYFDRMEKSGIRA), 280 to 314 (DEVTVAGYISACAQLGASKYADRAVQIAQKSGYSP), 317 to 347 (HVVIGSALIDMYSKCGNVEEAVNVFMSMNNK), 348 to 383 (NVFTYSSMILGLATHGRAQEALHLFHYMVTQTEIKP), 384 to 419 (NTVTFVGALMACSHSGLVDQGRQVFDSMYQTFGVQP), and 420 to 450 (TRDHYTCMVDLLGRTGRLQEALELIKTMSVE). A type E motif region spans residues 455–530 (VWGALLGACR…TPAVSWVVDK (76 aa)). A type E(+) motif region spans residues 532–562 (GQMHKFFPGNLNHPMSNKIQDKLEELVERLT). A type DYW motif region spans residues 563–657 (VLGYQPDLSS…SGDCSCGDFW (95 aa)).

It belongs to the PPR family. PCMP-H subfamily.

The polypeptide is Pentatricopeptide repeat-containing protein At5g44230 (PCMP-H17) (Arabidopsis thaliana (Mouse-ear cress)).